The following is a 2184-amino-acid chain: Genome polyprotein (2184 aa).

Gly-2 carries N-myristoyl glycine; by host lipidation. Topologically, residues 2–1494 (GAQVSTQKTG…HVSRAFICLQ (1493 aa)) are cytoplasmic. The interval 566–582 (FYQSPVEGAIERAIARV) is amphipathic alpha-helix. Catalysis depends on for protease 2A activity residues His-871 and Asp-889. Positions 906 and 908 each coordinate Zn(2+). Residue Cys-960 is the For protease 2A activity of the active site. 2 residues coordinate Zn(2+): Cys-966 and His-968. The tract at residues 1100–1172 (SNGWLKKFTE…EQSAPSQSDQ (73 aa)) is membrane-binding. The interval 1100–1238 (SNGWLKKFTE…SPGAGKSVAT (139 aa)) is oligomerization. The tract at residues 1121–1125 (AIKIQ) is RNA-binding. Residues 1204–1360 (EKKMSNYIQF…SMYSQNGKIN (157 aa)) form the SF3 helicase domain. Zn(2+)-binding residues include Cys-1368, Cys-1380, and Cys-1385. The segment at 1368–1385 (CDEECCPVNFKKCCPLVC) adopts a C4-type; degenerate zinc-finger fold. The segment at 1412-1419 (EYNHRHSV) is RNA-binding. Positions 1423-1428 (LEALFQ) are oligomerization. The stretch at 1495–1510 (ALTTFVSVAGIIYIIY) is an intramembrane region. The Cytoplasmic portion of the chain corresponds to 1511–2184 (KLFAGFQGAY…TLRRKWLDSF (674 aa)). At Tyr-1520 the chain carries O-(5'-phospho-RNA)-tyrosine. In terms of domain architecture, Peptidase C3 spans 1540–1718 (GPAFEFAVAM…FSAALLKHYF (179 aa)). Residues His-1579, Glu-1610, and Cys-1686 each act as for protease 3C activity in the active site. Positions 1949-2065 (GHLIAFDYSG…SYPWPIDASL (117 aa)) constitute a RdRp catalytic domain. Residues Asp-1955 and Asp-2051 each coordinate Mg(2+).

Belongs to the picornaviruses polyprotein family. In terms of assembly, interacts with capsid protein VP1 and capsid protein VP3 to form heterotrimeric protomers. Interacts with capsid protein VP0, and capsid protein VP3 to form heterotrimeric protomers. Five protomers subsequently associate to form pentamers which serve as building blocks for the capsid. Interacts with capsid protein VP2, capsid protein VP3 and capsid protein VP4 following cleavage of capsid protein VP0. Interacts with host CXADR. As to quaternary structure, interacts with capsid protein VP1 and capsid protein VP3 in the mature capsid. In terms of assembly, interacts with capsid protein VP0 and capsid protein VP1 to form heterotrimeric protomers. Five protomers subsequently associate to form pentamers which serve as building blocks for the capsid. Interacts with capsid protein VP4 in the mature capsid. Interacts with protein 2C; this interaction may be important for virion morphogenesis. Interacts with capsid protein VP1 and capsid protein VP3. As to quaternary structure, homodimer. In terms of assembly, homohexamer; forms a hexameric ring structure with 6-fold symmetry characteristic of AAA+ ATPases. Interacts (via N-terminus) with host RTN3 (via reticulon domain); this interaction is important for viral replication. Interacts with capsid protein VP3; this interaction may be important for virion morphogenesis. Interacts with protein 3CD. As to quaternary structure, homodimer. Interacts with host GBF1. Interacts (via GOLD domain) with host ACBD3 (via GOLD domain); this interaction allows the formation of a viral protein 3A/ACBD3 heterotetramer with a 2:2 stoichiometry, which will stimulate the recruitment of host PI4KB in order to synthesize PI4P at the viral RNA replication sites. In terms of assembly, interacts with RNA-directed RNA polymerase. Interacts with protein 3AB and with RNA-directed RNA polymerase. As to quaternary structure, interacts with Viral protein genome-linked and with protein 3CD. The cofactor is Mg(2+). In terms of processing, specific enzymatic cleavages in vivo by the viral proteases yield processing intermediates and the mature proteins. Post-translationally, myristoylation is required for the formation of pentamers during virus assembly. Further assembly of 12 pentamers and a molecule of genomic RNA generates the provirion. During virion maturation, immature virions are rendered infectious following cleavage of VP0 into VP4 and VP2. This maturation seems to be an autocatalytic event triggered by the presence of RNA in the capsid and it is followed by a conformational change infectious virion. In terms of processing, myristoylation is required during RNA encapsidation and formation of the mature virus particle. Post-translationally, VPg is uridylylated by the polymerase into VPg-pUpU. This acts as a nucleotide-peptide primer for the genomic RNA replication.

Its subcellular location is the virion. It localises to the host cytoplasm. It is found in the host cytoplasmic vesicle membrane. The protein resides in the host nucleus. The catalysed reaction is a ribonucleoside 5'-triphosphate + H2O = a ribonucleoside 5'-diphosphate + phosphate + H(+). It catalyses the reaction Selective cleavage of Tyr-|-Gly bond in the picornavirus polyprotein.. The enzyme catalyses RNA(n) + a ribonucleoside 5'-triphosphate = RNA(n+1) + diphosphate. It carries out the reaction Selective cleavage of Gln-|-Gly bond in the poliovirus polyprotein. In other picornavirus reactions Glu may be substituted for Gln, and Ser or Thr for Gly.. Its activity is regulated as follows. Replication or transcription is subject to high level of random mutations by the nucleotide analog ribavirin. Its function is as follows. Forms an icosahedral capsid of pseudo T=3 symmetry with capsid proteins VP2 and VP3. The capsid is 300 Angstroms in diameter, composed of 60 copies of each capsid protein and enclosing the viral positive strand RNA genome. Capsid protein VP1 mainly forms the vertices of the capsid. Capsid protein VP1 interacts with host CXADR to provide virion attachment to target host cells. This attachment induces virion internalization. Tyrosine kinases are probably involved in the entry process. After binding to its receptor, the capsid undergoes conformational changes. Capsid protein VP1 N-terminus (that contains an amphipathic alpha-helix) and capsid protein VP4 are externalized. Together, they shape a pore in the host membrane through which viral genome is translocated to host cell cytoplasm. Forms an icosahedral capsid of pseudo T=3 symmetry with capsid proteins VP2 and VP3. The capsid is 300 Angstroms in diameter, composed of 60 copies of each capsid protein and enclosing the viral positive strand RNA genome. In terms of biological role, lies on the inner surface of the capsid shell. After binding to the host receptor, the capsid undergoes conformational changes. Capsid protein VP4 is released, Capsid protein VP1 N-terminus is externalized, and together, they shape a pore in the host membrane through which the viral genome is translocated into the host cell cytoplasm. Functionally, component of immature procapsids, which is cleaved into capsid proteins VP4 and VP2 after maturation. Allows the capsid to remain inactive before the maturation step. Its function is as follows. Cysteine protease that cleaves viral polyprotein and specific host proteins. It is responsible for the autocatalytic cleavage between the P1 and P2 regions, which is the first cleavage occurring in the polyprotein. Also cleaves the host translation initiation factor EIF4G1, in order to shut down the capped cellular mRNA translation. Inhibits the host nucleus-cytoplasm protein and RNA trafficking by cleaving host members of the nuclear pores. Counteracts stress granule formation probably by antagonizing its assembly or promoting its dissassembly. Cleaves and inhibits host IFIH1/MDA5, thereby inhibiting the type-I IFN production and the establishment of the antiviral state. Cleaves and inhibits host MAVS, thereby inhibiting the type-I IFN production and the establishment of the antiviral state. Plays an essential role in the virus replication cycle by acting as a viroporin. Creates a pore in the host endoplasmic reticulum and as a consequence releases Ca2+ in the cytoplasm of infected cell. In turn, high levels of cytoplasmic calcium may trigger membrane trafficking and transport of viral ER-associated proteins to viroplasms, sites of viral genome replication. In terms of biological role, induces and associates with structural rearrangements of intracellular membranes. Displays RNA-binding, nucleotide binding and NTPase activities. May play a role in virion morphogenesis and viral RNA encapsidation by interacting with the capsid protein VP3. Functionally, localizes the viral replication complex to the surface of membranous vesicles. Together with protein 3CD binds the Cis-Active RNA Element (CRE) which is involved in RNA synthesis initiation. Acts as a cofactor to stimulate the activity of 3D polymerase, maybe through a nucleid acid chaperone activity. Its function is as follows. Localizes the viral replication complex to the surface of membranous vesicles. It inhibits host cell endoplasmic reticulum-to-Golgi apparatus transport and causes the disassembly of the Golgi complex, possibly through GBF1 interaction. This would result in depletion of MHC, trail receptors and IFN receptors at the host cell surface. Plays an essential role in viral RNA replication by recruiting ACBD3 and PI4KB at the viral replication sites, thereby allowing the formation of the rearranged membranous structures where viral replication takes place. Acts as a primer for viral RNA replication and remains covalently bound to viral genomic RNA. VPg is uridylylated prior to priming replication into VPg-pUpU. The oriI viral genomic sequence may act as a template for this. The VPg-pUpU is then used as primer on the genomic RNA poly(A) by the RNA-dependent RNA polymerase to replicate the viral genome. During genome replication, the VPg-RNA linkage is removed by the host TDP2, thereby accelerating replication. During the late stage of the replication cycle, host TDP2 is excluded from sites of viral RNA synthesis and encapsidation, allowing for the generation of progeny virions. In terms of biological role, involved in the viral replication complex and viral polypeptide maturation. It exhibits protease activity with a specificity and catalytic efficiency that is different from protease 3C. Protein 3CD lacks polymerase activity. Protein 3CD binds to the 5'UTR of the viral genome. Functionally, replicates the viral genomic RNA on the surface of intracellular membranes. May form linear arrays of subunits that propagate along a strong head-to-tail interaction called interface-I. Covalently attaches UMP to a tyrosine of VPg, which is used to prime RNA synthesis. The positive stranded RNA genome is first replicated at virus induced membranous vesicles, creating a dsRNA genomic replication form. This dsRNA is then used as template to synthesize positive stranded RNA genomes. ss(+)RNA genomes are either translated, replicated or encapsidated. Its function is as follows. Major viral protease that mediates proteolytic processing of the polyprotein. Cleaves host EIF5B, contributing to host translation shutoff. Also cleaves host PABPC1, contributing to host translation shutoff. Cleaves host NLRP1, triggers host N-glycine-mediated degradation of the autoinhibitory NLRP1 N-terminal fragment. The protein is Genome polyprotein of Coxsackievirus B6 (strain Schmitt).